The sequence spans 100 residues: Small ribosomal subunit protein uS14c (100 aa).

The interval 1 to 54 (MARKSLIQRERKRQKLEQKFHSIRRSSKKEISKVSSLSGKWEIHGKLQSPPRNS) is disordered.

This sequence belongs to the universal ribosomal protein uS14 family. Part of the 30S ribosomal subunit.

It is found in the plastid. It localises to the chloroplast. Its function is as follows. Binds 16S rRNA, required for the assembly of 30S particles. The sequence is that of Small ribosomal subunit protein uS14c from Piper cenocladum (Ant piper).